A 295-amino-acid polypeptide reads, in one-letter code: Probable peptidyl-prolyl cis-trans isomerase B (295 aa).

Disordered stretches follow at residues 105-128 and 274-295; these read SADK…PATV and IASG…LRLD. The region spanning 126–294 is the PPIase cyclophilin-type domain; sequence ATVSASMATN…TEVTIESLRL (169 aa).

This sequence belongs to the cyclophilin-type PPIase family.

It carries out the reaction [protein]-peptidylproline (omega=180) = [protein]-peptidylproline (omega=0). Functionally, PPIases accelerate the folding of proteins. It catalyzes the cis-trans isomerization of proline imidic peptide bonds in oligopeptides. In Mycobacterium leprae (strain TN), this protein is Probable peptidyl-prolyl cis-trans isomerase B (ppiB).